The following is a 378-amino-acid chain: Ribosomal RNA large subunit methyltransferase G (378 aa).

Belongs to the methyltransferase superfamily. RlmG family.

The protein localises to the cytoplasm. It carries out the reaction guanosine(1835) in 23S rRNA + S-adenosyl-L-methionine = N(2)-methylguanosine(1835) in 23S rRNA + S-adenosyl-L-homocysteine + H(+). In terms of biological role, specifically methylates the guanine in position 1835 (m2G1835) of 23S rRNA. The sequence is that of Ribosomal RNA large subunit methyltransferase G from Shewanella putrefaciens (strain CN-32 / ATCC BAA-453).